The sequence spans 307 residues: Protein Y (307 aa).

It belongs to the ATP-dependent AMP-binding enzyme family.

The protein operates within antibiotic biosynthesis; candicidin biosynthesis. May be a p-aminobenzoic acid-CoA ligase that activates PabA to start the biosynthesis of candicidin. This is Protein Y from Streptomyces griseus.